The sequence spans 357 residues: Vomeronasal type-1 receptor 5 (357 aa).

Residues 1–3 (MLK) are Extracellular-facing. Residues 4–24 (LVIIENMAEIMLFSLDLLLFS) traverse the membrane as a helical segment. Topologically, residues 25–52 (TDILCFNFPSKMIKLPGFITIQIFFYPQ) are cytoplasmic. Residues 53–73 (ASFGISANTILFLFHIFTFVF) traverse the membrane as a helical segment. The Extracellular segment spans residues 74–81 (SHRSKSID). Residues 82 to 102 (MIISHLSLIHILLLFTQAILV) traverse the membrane as a helical segment. At 103-130 (SLDFFGSQNTQDDLRCKVIVFLNKVMRG) the chain is on the cytoplasmic side. The chain crosses the membrane as a helical span at residues 131–151 (LSICTPCLLNVLQAIISPSIF). The Extracellular portion of the chain corresponds to 152 to 163 (SLAKLKHPSASH). The chain crosses the membrane as a helical span at residues 164–184 (ILGFFLFSWVLNMFIGVIFCC). The Cytoplasmic portion of the chain corresponds to 185–269 (TLWLPPVKWG…PVSPVKRASQ (85 aa)). The helical transmembrane segment at 270–290 (TILLLVSFVFIYWVDFMFSFS) threads the bilayer. At 291 to 300 (RGVTWINDSL) the chain is on the extracellular side. Asparagine 297 is a glycosylation site (N-linked (GlcNAc...) asparagine). A helical membrane pass occupies residues 301-321 (LVWFQVIVANSYATISPLMLI). The Cytoplasmic portion of the chain corresponds to 322 to 357 (YADNQIFKTLQMLWFKYLSPPKLMLKFNRQCGSTKK).

Belongs to the G-protein coupled receptor 1 family.

It is found in the cell membrane. In terms of biological role, putative pheromone receptor. The polypeptide is Vomeronasal type-1 receptor 5 (VN1R5) (Gorilla gorilla gorilla (Western lowland gorilla)).